The following is a 266-amino-acid chain: Phosphate import ATP-binding protein PstB 2 (266 aa).

The ABC transporter domain occupies 13 to 252 (LEAQGVNVYY…GPTEEIFQNP (240 aa)). 45 to 52 (GPSGCGKS) is an ATP binding site.

It belongs to the ABC transporter superfamily. Phosphate importer (TC 3.A.1.7) family. As to quaternary structure, the complex is composed of two ATP-binding proteins (PstB), two transmembrane proteins (PstC and PstA) and a solute-binding protein (PstS).

It is found in the cell inner membrane. The enzyme catalyses phosphate(out) + ATP + H2O = ADP + 2 phosphate(in) + H(+). In terms of biological role, part of the ABC transporter complex PstSACB involved in phosphate import. Responsible for energy coupling to the transport system. This chain is Phosphate import ATP-binding protein PstB 2, found in Synechocystis sp. (strain ATCC 27184 / PCC 6803 / Kazusa).